A 397-amino-acid polypeptide reads, in one-letter code: Acetate kinase (397 aa).

Asparagine 8 serves as a coordination point for Mg(2+). Residue lysine 15 coordinates ATP. Arginine 89 provides a ligand contact to substrate. Aspartate 146 serves as the catalytic Proton donor/acceptor. Residues 206–210 (HLGNG), 281–283 (DLR), and 329–333 (GVGEN) each bind ATP. Glutamate 382 contacts Mg(2+).

The protein belongs to the acetokinase family. Homodimer. Requires Mg(2+) as cofactor. Mn(2+) serves as cofactor.

Its subcellular location is the cytoplasm. The catalysed reaction is acetate + ATP = acetyl phosphate + ADP. Its pathway is metabolic intermediate biosynthesis; acetyl-CoA biosynthesis; acetyl-CoA from acetate: step 1/2. Functionally, catalyzes the formation of acetyl phosphate from acetate and ATP. Can also catalyze the reverse reaction. In Bacillus mycoides (strain KBAB4) (Bacillus weihenstephanensis), this protein is Acetate kinase.